The following is a 429-amino-acid chain: 3-phosphoshikimate 1-carboxyvinyltransferase (429 aa).

3-phosphoshikimate is bound by residues Lys11, Ser12, and Arg16. Phosphoenolpyruvate is bound at residue Lys11. Phosphoenolpyruvate contacts are provided by Gly82 and Arg110. 3-phosphoshikimate-binding residues include Ser155, Gln157, Asp302, and Lys329. Gln157 is a binding site for phosphoenolpyruvate. Asp302 acts as the Proton acceptor in catalysis. Positions 333 and 385 each coordinate phosphoenolpyruvate.

This sequence belongs to the EPSP synthase family. As to quaternary structure, monomer.

The protein localises to the cytoplasm. The enzyme catalyses 3-phosphoshikimate + phosphoenolpyruvate = 5-O-(1-carboxyvinyl)-3-phosphoshikimate + phosphate. The protein operates within metabolic intermediate biosynthesis; chorismate biosynthesis; chorismate from D-erythrose 4-phosphate and phosphoenolpyruvate: step 6/7. In terms of biological role, catalyzes the transfer of the enolpyruvyl moiety of phosphoenolpyruvate (PEP) to the 5-hydroxyl of shikimate-3-phosphate (S3P) to produce enolpyruvyl shikimate-3-phosphate and inorganic phosphate. This is 3-phosphoshikimate 1-carboxyvinyltransferase from Helicobacter pylori (strain J99 / ATCC 700824) (Campylobacter pylori J99).